The sequence spans 247 residues: tRNA (guanine-N(1)-)-methyltransferase (247 aa).

S-adenosyl-L-methionine contacts are provided by residues Gly-112 and 131–136 (LGDFVL).

Belongs to the RNA methyltransferase TrmD family. Homodimer.

It localises to the cytoplasm. The enzyme catalyses guanosine(37) in tRNA + S-adenosyl-L-methionine = N(1)-methylguanosine(37) in tRNA + S-adenosyl-L-homocysteine + H(+). Specifically methylates guanosine-37 in various tRNAs. This chain is tRNA (guanine-N(1)-)-methyltransferase, found in Syntrophotalea carbinolica (strain DSM 2380 / NBRC 103641 / GraBd1) (Pelobacter carbinolicus).